A 392-amino-acid polypeptide reads, in one-letter code: Y' element ATP-dependent helicase YFL066C (392 aa).

The region spanning 1-175 (MADTPSVAVQ…LQRIGLTGLA (175 aa)) is the Helicase ATP-binding domain. 11–18 (APPGYGKT) lines the ATP pocket. The Helicase C-terminal domain occupies 232 to 381 (KLLLALFEIE…EFYGLESKKG (150 aa)).

The protein belongs to the helicase family. Yeast subtelomeric Y' repeat subfamily.

Functionally, catalyzes DNA unwinding and is involved in telomerase-independent telomere maintenance. This chain is Y' element ATP-dependent helicase YFL066C, found in Saccharomyces cerevisiae (strain ATCC 204508 / S288c) (Baker's yeast).